Here is an 813-residue protein sequence, read N- to C-terminus: Leucine--tRNA ligase (813 aa).

Residues 41-51 (PYPSGTLHMGH) carry the 'HIGH' region motif. The short motif at 575 to 579 (KMSKS) is the 'KMSKS' region element. Residue Lys578 participates in ATP binding.

The protein belongs to the class-I aminoacyl-tRNA synthetase family.

The protein localises to the cytoplasm. The catalysed reaction is tRNA(Leu) + L-leucine + ATP = L-leucyl-tRNA(Leu) + AMP + diphosphate. This chain is Leucine--tRNA ligase, found in Francisella tularensis subsp. holarctica (strain FTNF002-00 / FTA).